A 292-amino-acid chain; its full sequence is Cytidine deaminase (292 aa).

CMP/dCMP-type deaminase domains follow at residues 47–167 (TTLK…FGPK) and 186–292 (DHQD…YYSL). 88–90 (NQE) is a binding site for substrate. Zn(2+) is bound at residue His101. Glu103 acts as the Proton donor in catalysis. The Zn(2+) site is built by Cys128 and Cys131.

Belongs to the cytidine and deoxycytidylate deaminase family. In terms of assembly, homodimer. The cofactor is Zn(2+).

It catalyses the reaction cytidine + H2O + H(+) = uridine + NH4(+). It carries out the reaction 2'-deoxycytidine + H2O + H(+) = 2'-deoxyuridine + NH4(+). Functionally, this enzyme scavenges exogenous and endogenous cytidine and 2'-deoxycytidine for UMP synthesis. The chain is Cytidine deaminase from Haemophilus influenzae (strain ATCC 51907 / DSM 11121 / KW20 / Rd).